The primary structure comprises 230 residues: Ion-translocating oxidoreductase complex subunit E (230 aa).

The Cytoplasmic portion of the chain corresponds to 1–17; sequence MSENRTLMLNGMWNNNP. 2 consecutive transmembrane segments (helical) span residues 18–38 and 39–59; these read ALVQ…VTNA and LGLG…VSLV. Residues 60–68 lie on the Cytoplasmic side of the membrane; sequence RDYVPKEVR. A helical membrane pass occupies residues 69-89; that stretch reads IPVFVMIIASLVTCVQLLMNA. Residues 90–92 are Periplasmic-facing; sequence YAY. The helical transmembrane segment at 93–113 threads the bilayer; that stretch reads GLYLSLGIFIPLIVTNCIIIG. Topologically, residues 114 to 123 are cytoplasmic; it reads RAEAFASKND. Residues 124–144 form a helical membrane-spanning segment; that stretch reads VLPAALDGFWMGLGMTSVLVV. The Periplasmic portion of the chain corresponds to 145 to 181; that stretch reads LGSLREIIGNGTLFDGADLLLGEWAKVLRIEVFHFDS. The chain crosses the membrane as a helical span at residues 182-202; that stretch reads AFLLALLPPGAFIGVGFLIAA. The Cytoplasmic segment spans residues 203 to 230; the sequence is KSVIDKQIAARQPKQQKQAIERARVTNV.

Belongs to the NqrDE/RnfAE family. As to quaternary structure, the complex is composed of six subunits: RnfA, RnfB, RnfC, RnfD, RnfE and RnfG.

Its subcellular location is the cell inner membrane. In terms of biological role, part of a membrane-bound complex that couples electron transfer with translocation of ions across the membrane. This is Ion-translocating oxidoreductase complex subunit E from Vibrio cholerae serotype O1 (strain ATCC 39541 / Classical Ogawa 395 / O395).